Reading from the N-terminus, the 542-residue chain is POTE ankyrin domain family member C (542 aa).

7 ANK repeats span residues 138–171 (EDLDKLHRAAWWGKVPRKDLIVMLRDTDMNKRDK), 172–201 (QKRTALHLASANGNSEVVQLLLDRRCQLNV), 205–234 (KKRTALIKAVQCQEDECVLMLLEHGADQNI), 238–267 (YGNTTLHYAVHNEDKLMAKALLLYGADIES), 271–300 (CGLTPLLLGVHEQKQQVVKFLIKKKANLNA), 304–333 (YGRTALILAVCCGSASIVNLLLEQNVDVSS), and 337–373 (SGQTAREYAVSSHHHVICELLSDYKEKQMLKISSENS). Residues 369-494 (SSENSNPEQD…NTGISQDEIL (126 aa)) are disordered. Basic and acidic residues-rich tracts occupy residues 377 to 392 (QDLKLTSEEESQRLKV), 401 to 412 (MSQEPEINKDCD), and 466 to 481 (EEYHSDEQNDTRKQLS). Residues 482–494 (EEQNTGISQDEIL) show a composition bias toward polar residues. The stretch at 489–538 (SQDEILTNKQKQIEVAEKKMNSELSLSHKKEEDLLRENSMLQEEIAMLIS) forms a coiled coil.

The protein belongs to the POTE family. As to expression, expressed in prostate and testis.

In Homo sapiens (Human), this protein is POTE ankyrin domain family member C (POTEC).